The chain runs to 264 residues: Signal peptidase I (264 aa).

Over 1-18 (MNRDNINSNKTVKQEFGS) the chain is Cytoplasmic. Residues 19 to 39 (FAFVICIALVIRILIMEPFTV) form a helical membrane-spanning segment. Residues 40-264 (PTGSMKATIL…IFKNLYNVDE (225 aa)) lie on the Extracellular side of the membrane. Active-site residues include Ser-43 and Lys-106.

The protein belongs to the peptidase S26 family.

It localises to the cell membrane. It carries out the reaction Cleavage of hydrophobic, N-terminal signal or leader sequences from secreted and periplasmic proteins.. This Rickettsia prowazekii (strain Madrid E) protein is Signal peptidase I (lepB).